A 379-amino-acid polypeptide reads, in one-letter code: MSKRDYYEVLGVEKSASERDIKKAYKRLAMKYHPDRTQGDKAMEEKFKEVQEAYEILTDSQKRAAYDQYGHAGVDPNRGHGGGHGAGDFGDIFGDVFGDIFGGGRGGGRQSRAARGSDLRYNLELSLEEAVRGKSVEIRVPTLAECDTCDGSGAKKGSSAKTCTTCHGQGQVQMRQGFFAVQQACPTCGGKGKIITDPCDVCHGQGRVEKTKTLSVKVPAGVDTGDRIRLSNEGEAGENGAPAGDLYVQVHVKQHKIFERDGNNLYCEVPLSFTRAAIGGEIEVPTLEGKVKLKVTPETQTGKMFRLRNKGVKSVRSGSVGDLICKVVIETPVNLNSRQKELLQELEESMGKGKETAKNRPKESGFFDGVKKFFDDLTN.

Residues 5-70 (DYYEVLGVEK…QKRAAYDQYG (66 aa)) enclose the J domain. Residues 133–211 (GKSVEIRVPT…CHGQGRVEKT (79 aa)) form a CR-type zinc finger. Residues Cys-146, Cys-149, Cys-163, Cys-166, Cys-185, Cys-188, Cys-199, and Cys-202 each coordinate Zn(2+). CXXCXGXG motif repeat units follow at residues 146-153 (CDTCDGSG), 163-170 (CTTCHGQG), 185-192 (CPTCGGKG), and 199-206 (CDVCHGQG).

It belongs to the DnaJ family. In terms of assembly, homodimer. Requires Zn(2+) as cofactor.

Its subcellular location is the cytoplasm. Its function is as follows. Participates actively in the response to hyperosmotic and heat shock by preventing the aggregation of stress-denatured proteins and by disaggregating proteins, also in an autonomous, DnaK-independent fashion. Unfolded proteins bind initially to DnaJ; upon interaction with the DnaJ-bound protein, DnaK hydrolyzes its bound ATP, resulting in the formation of a stable complex. GrpE releases ADP from DnaK; ATP binding to DnaK triggers the release of the substrate protein, thus completing the reaction cycle. Several rounds of ATP-dependent interactions between DnaJ, DnaK and GrpE are required for fully efficient folding. Also involved, together with DnaK and GrpE, in the DNA replication of plasmids through activation of initiation proteins. The polypeptide is Chaperone protein DnaJ (Pseudoalteromonas atlantica (strain T6c / ATCC BAA-1087)).